Reading from the N-terminus, the 362-residue chain is Aminomethyltransferase (362 aa).

Belongs to the GcvT family. The glycine cleavage system is composed of four proteins: P, T, L and H.

It carries out the reaction N(6)-[(R)-S(8)-aminomethyldihydrolipoyl]-L-lysyl-[protein] + (6S)-5,6,7,8-tetrahydrofolate = N(6)-[(R)-dihydrolipoyl]-L-lysyl-[protein] + (6R)-5,10-methylene-5,6,7,8-tetrahydrofolate + NH4(+). Functionally, the glycine cleavage system catalyzes the degradation of glycine. The sequence is that of Aminomethyltransferase from Listeria monocytogenes serotype 4b (strain F2365).